The primary structure comprises 485 residues: E-selectin (485 aa).

An N-terminal signal peptide occupies residues 1–22 (MIVSQYLSALTFVLLLFKESRT). Positions 23 to 140 (WSYHASTEMM…CTKQKLALCY (118 aa)) constitute a C-type lectin domain. Residues 23–430 (WSYHASTEMM…CEAPTVSQTP (408 aa)) are Extracellular-facing. Disulfide bonds link C41–C139, C112–C131, C144–C155, C149–C164, C166–C175, C181–C224, C194–C206, C210–C237, C242–C286, C255–C268, C272–C299, C304–C349, C335–C362, C367–C408, and C394–C421. N-linked (GlcNAc...) asparagine glycans are attached at residues N61, N79, and N88. 3 residues coordinate Ca(2+): E102, N104, and E110. A carbohydrate-binding positions include 102 to 110 (EPNNKQSDE), 114 to 119 (EIYIKR), and 127 to 129 (NDE). Ca(2+) is bound by residues N127 and D128. Residues 141–176 (KAACNPTPCGSHGECVETINNYTCQCHPGFKGLKCE) enclose the EGF-like domain. N161 is a glycosylation site (N-linked (GlcNAc...) asparagine). 4 Sushi domains span residues 179–239 (VTCP…KCNV), 240–301 (VKCD…TCKA), 302–364 (VSCA…VCEV), and 365–423 (VRCS…TCEA). A glycan (N-linked (GlcNAc...) asparagine) is linked at N203. Residue N265 is glycosylated (N-linked (GlcNAc...) asparagine). Residues N312 and N316 are each glycosylated (N-linked (GlcNAc...) asparagine). N-linked (GlcNAc...) asparagine glycosylation is found at N379 and N401. Residues 431 to 453 (LAVGLSTAGVSLVTIPSFLFWLL) form a helical membrane-spanning segment. Residues 454–485 (KRLQKKAKKFSPASSCSSLKSNGCYSTPSKLI) are Cytoplasmic-facing. Residues 466-485 (ASSCSSLKSNGCYSTPSKLI) form a disordered region.

Belongs to the selectin/LECAM family. Interacts with SELPLG/PSGL1 and PODXL2 through the sialyl Lewis X epitope. SELPLG sulfation appears not to be required for this interaction.

Its subcellular location is the cell membrane. Its function is as follows. Cell-surface glycoprotein having a role in immunoadhesion. Mediates in the adhesion of blood neutrophils in cytokine-activated endothelium through interaction with SELPLG/PSGL1. May have a role in capillary morphogenesis. The protein is E-selectin (SELE) of Bos taurus (Bovine).